Reading from the N-terminus, the 349-residue chain is Flagellar P-ring protein (349 aa).

An N-terminal signal peptide occupies residues 1 to 16 (MKYFFIIALLLSSLYS).

This sequence belongs to the FlgI family. As to quaternary structure, the basal body constitutes a major portion of the flagellar organelle and consists of four rings (L,P,S, and M) mounted on a central rod.

The protein resides in the periplasm. The protein localises to the bacterial flagellum basal body. Assembles around the rod to form the L-ring and probably protects the motor/basal body from shearing forces during rotation. In Aliarcobacter butzleri (strain RM4018) (Arcobacter butzleri), this protein is Flagellar P-ring protein.